A 615-amino-acid polypeptide reads, in one-letter code: Delta(14)-sterol reductase LBR (615 aa).

Residues 1–62 (MPSRKFADGE…DIKPLTSFRQ (62 aa)) form the Tudor domain. Topologically, residues 1–211 (MPSRKFADGE…IRAKDLEFGG (211 aa)) are nuclear. A disordered region spans residues 52–109 (NDIKPLTSFRQRKGGSTSSSPSRRRGSRSRSRSRSPGRPPKSARRSASASHQADIKEA). Lys55 carries the N6-acetyllysine modification. Thr58 carries the phosphothreonine modification. Residues Ser59 and Ser67 each carry the phosphoserine modification. Residues Ser71 and Ser86 each carry the phosphoserine; by CDK1 modification. A compositionally biased stretch (basic residues) spans 73-86 (SRRRGSRSRSRSRS). 2 positions are modified to phosphoserine: Ser97 and Ser99. The residue at position 118 (Thr118) is a Phosphothreonine. Position 128 is a phosphoserine (Ser128). Phosphothreonine is present on Thr200. The next 8 helical transmembrane spans lie at 212 to 232 (VPGVFLIMFGLPVFLFLLLLM), 258 to 278 (VFGVYLLWFLIQVLFYLLPIG), 299 to 319 (FYAFILTSAVIGTSLFQGVEF), 326 to 346 (FLQFALAATVFCVVLSVYLYM), 386 to 406 (FCELRPGLIGWVVINLVMLLA), 447 to 467 (IIHDGFGFMLAFGDLVWVPFI), 481 to 501 (EVSWPMASLIIVLKLCGYVIF), and 561 to 581 (PCGFNHILPYFYIIYFTMLLV). An N6-acetyllysine mark is found at Lys594 and Lys601.

It belongs to the ERG4/ERG24 family. Interacts with CBX5. Interacts with DNA. Interaction with DNA is sequence independent with higher affinity for supercoiled and relaxed circular DNA than linear DNA. Interacts with lamin B. Interacts with CLNK. Interacts with TMEM147; promoting LBR localization to the nucleus inner membrane. Phosphorylated by CDK1 in mitosis when the inner nuclear membrane breaks down into vesicles that dissociate from the lamina and the chromatin. It is phosphorylated by different protein kinases in interphase when the membrane is associated with these structures. Phosphorylation of LBR and HP1 proteins may be responsible for some of the alterations in chromatin organization and nuclear structure which occur at various times during the cell cycle. Phosphorylated by SRPK1. In late anaphase LBR is dephosphorylated, probably by PP1 and/or PP2A, allowing reassociation with chromatin. As to expression, expressed in the bone marrow, liver, heart, adrenal gland, lung, placenta and uterus. Expressed in osteoclasts and osteoblast-like cells.

The protein localises to the nucleus inner membrane. The protein resides in the endoplasmic reticulum membrane. Its subcellular location is the cytoplasm. It is found in the nucleus. It carries out the reaction 5alpha-cholest-8,14-dien-3beta-ol + NADPH + H(+) = 5alpha-cholest-8-en-3beta-ol + NADP(+). It catalyses the reaction 4,4-dimethyl-5alpha-cholesta-8,24-dien-3beta-ol + NADP(+) = 4,4-dimethyl-5alpha-cholesta-8,14,24-trien-3beta-ol + NADPH + H(+). The enzyme catalyses 4,4-dimethyl-8,14-cholestadien-3beta-ol + NADPH + H(+) = 4,4-dimethyl-5alpha-cholest-8-en-3beta-ol + NADP(+). It participates in steroid biosynthesis; cholesterol biosynthesis. Its function is as follows. Catalyzes the reduction of the C14-unsaturated bond of lanosterol, as part of the metabolic pathway leading to cholesterol biosynthesis. Plays a critical role in myeloid cell cholesterol biosynthesis which is essential to both myeloid cell growth and functional maturation. Mediates the activation of NADPH oxidases, perhaps by maintaining critical levels of cholesterol required for membrane lipid raft formation during neutrophil differentiation. Anchors the lamina and the heterochromatin to the inner nuclear membrane. The sequence is that of Delta(14)-sterol reductase LBR (LBR) from Homo sapiens (Human).